A 551-amino-acid chain; its full sequence is Nucleobase-ascorbate transporter 3 (551 aa).

Positions 1-30 (MVETGHHHQHPPAPAAAGHPPVPSMAMARN) are disordered. 12 helical membrane passes run 56-76 (ETVV…VLIA), 92-111 (RVIQ…QTLI), 117-136 (TVMG…IRDY), 158-178 (SLII…WGNL), 179-199 (IRIF…LGLF), 202-222 (GFPL…LLII), 242-262 (ALLV…VSGA), 306-326 (VFGM…VFFA), 390-410 (FFMI…SIPL), 412-432 (IFAG…ISFI), 442-462 (NMYV…YFLA), and 481-501 (DILN…ATIL).

This sequence belongs to the nucleobase:cation symporter-2 (NCS2) (TC 2.A.40) family. As to expression, expressed in the apical meristem 4 days after imbibition (DAI). Expressed in the major veins of rosette leaves and pedicels. Expressed in the root central cylinder, root meristems, root tips and lateral root primordia.

Its subcellular location is the membrane. The polypeptide is Nucleobase-ascorbate transporter 3 (NAT3) (Arabidopsis thaliana (Mouse-ear cress)).